We begin with the raw amino-acid sequence, 711 residues long: Ribosomal RNA large subunit methyltransferase K/L (711 aa).

The THUMP domain occupies 43-154 (TLYRTLLWSR…RENLVISLDL (112 aa)).

This sequence belongs to the methyltransferase superfamily. RlmKL family.

It localises to the cytoplasm. It catalyses the reaction guanosine(2445) in 23S rRNA + S-adenosyl-L-methionine = N(2)-methylguanosine(2445) in 23S rRNA + S-adenosyl-L-homocysteine + H(+). It carries out the reaction guanosine(2069) in 23S rRNA + S-adenosyl-L-methionine = N(2)-methylguanosine(2069) in 23S rRNA + S-adenosyl-L-homocysteine + H(+). In terms of biological role, specifically methylates the guanine in position 2445 (m2G2445) and the guanine in position 2069 (m7G2069) of 23S rRNA. This chain is Ribosomal RNA large subunit methyltransferase K/L, found in Haemophilus influenzae (strain PittEE).